We begin with the raw amino-acid sequence, 142 residues long: Hemoglobin subunit alpha (142 aa).

Positions lysine 2 to arginine 142 constitute a Globin domain. O2 is bound at residue histidine 59. Position 88 (histidine 88) interacts with heme b.

Belongs to the globin family. As to quaternary structure, heterotetramer of two alpha chains and two beta chains. As to expression, red blood cells.

Involved in oxygen transport from the lung to the various peripheral tissues. The polypeptide is Hemoglobin subunit alpha (HBA) (Taricha granulosa (Roughskin newt)).